The following is a 358-amino-acid chain: Microbial Terpene synthase-like protein 13 (358 aa).

This sequence belongs to the terpene synthase family.

Functionally, no terpene synthase activity detected in vitro. The chain is Microbial Terpene synthase-like protein 13 from Selaginella moellendorffii (Spikemoss).